The primary structure comprises 999 residues: Transcription-repair-coupling factor (999 aa).

Residues Asp-499–Leu-656 form the Helicase ATP-binding domain. Residue Gly-512–Thr-519 participates in ATP binding. A DEEH box motif is present at residues Asp-609 to His-612. One can recognise a Helicase C-terminal domain in the interval Leu-677–Arg-833.

The protein in the N-terminal section; belongs to the UvrB family. This sequence in the C-terminal section; belongs to the helicase family. RecG subfamily.

Its subcellular location is the cytoplasm. Its function is as follows. Couples transcription and DNA repair by recognizing RNA polymerase (RNAP) stalled at DNA lesions. Mediates ATP-dependent release of RNAP and its truncated transcript from the DNA, and recruitment of nucleotide excision repair machinery to the damaged site. The protein is Transcription-repair-coupling factor of Helicobacter pylori (strain ATCC 700392 / 26695) (Campylobacter pylori).